A 621-amino-acid polypeptide reads, in one-letter code: Ubiquitin-like-specific protease 1 (621 aa).

Serine 2 carries the N-acetylserine modification. Phosphoserine occurs at positions 21 and 25. Disordered stretches follow at residues 116–150 (FDGS…ENYS) and 169–196 (RRRI…SNCD). Low complexity predominate over residues 124–141 (SGNSDVESRSSGSRSSDV). Position 179 is a phosphothreonine (threonine 179). Residues 179–196 (TPSTSPISSLASQKSNCD) show a composition bias toward polar residues. Phosphoserine is present on serine 264. The interval 432 to 621 (NIEITVRDFK…AHLILTDALK (190 aa)) is protease. Catalysis depends on residues histidine 514, aspartate 531, and cysteine 580.

It belongs to the peptidase C48 family.

The enzyme catalyses Hydrolysis of the alpha-linked peptide bond in the sequence Gly-Gly-|-Ala-Thr-Tyr at the C-terminal end of the small ubiquitin-like modifier (SUMO) propeptide, Smt3, leading to the mature form of the protein. A second reaction involves the cleavage of an epsilon-linked peptide bond between the C-terminal glycine of the mature SUMO and the lysine epsilon-amino group of the target protein.. Functionally, protease that catalyzes two essential functions in the SUMO pathway: processing of full-length SMT3 to its mature form and deconjugation of SMT3 from targeted proteins. Has an essential role in the G2/M phase of the cell cycle. This chain is Ubiquitin-like-specific protease 1 (ULP1), found in Saccharomyces cerevisiae (strain ATCC 204508 / S288c) (Baker's yeast).